We begin with the raw amino-acid sequence, 194 residues long: dCTP deaminase (194 aa).

Residues 110-115, D128, 136-138, Y171, K178, and Q182 contribute to the dCTP site; these read RSSLAR and VLE. Residue E138 is the Proton donor/acceptor of the active site. Residues 173–194 are disordered; it reads SRQDAKYKNQQSAVASRINQDR. Positions 180 to 194 are enriched in polar residues; it reads KNQQSAVASRINQDR.

It belongs to the dCTP deaminase family. As to quaternary structure, homotrimer.

The enzyme catalyses dCTP + H2O + H(+) = dUTP + NH4(+). Its pathway is pyrimidine metabolism; dUMP biosynthesis; dUMP from dCTP (dUTP route): step 1/2. In terms of biological role, catalyzes the deamination of dCTP to dUTP. The sequence is that of dCTP deaminase from Actinobacillus succinogenes (strain ATCC 55618 / DSM 22257 / CCUG 43843 / 130Z).